The primary structure comprises 317 residues: Cytochrome f (317 aa).

Residues 1 to 34 (MINFKKQIMKKTTFFLCAMLLVSSILIAPRSSLA) form the signal peptide. Residues Tyr35, Cys55, Cys58, and His59 each coordinate heme. A helical membrane pass occupies residues 284–304 (IIGLIAFFIGVGLTQILLVLK).

Belongs to the cytochrome f family. The 4 large subunits of the cytochrome b6-f complex are cytochrome b6, subunit IV (17 kDa polypeptide, PetD), cytochrome f and the Rieske protein, while the 4 small subunits are PetG, PetL, PetM and PetN. The complex functions as a dimer. It depends on heme as a cofactor.

It is found in the cellular thylakoid membrane. Its function is as follows. Component of the cytochrome b6-f complex, which mediates electron transfer between photosystem II (PSII) and photosystem I (PSI), cyclic electron flow around PSI, and state transitions. This chain is Cytochrome f, found in Prochlorococcus marinus (strain MIT 9515).